The primary structure comprises 390 residues: ATP-sensitive inward rectifier potassium channel 11 (390 aa).

Residues 1–65 (MLSRKGIIPE…LQDVFTTLVD (65 aa)) lie on the Cytoplasmic side of the membrane. Residues asparagine 48 and arginine 50 each contribute to the ATP site. Residues 66–92 (LKWTHTLLIFTMSFLCSWLLFAMVWWL) form a helical membrane-spanning segment. Topologically, residues 93–116 (IAFAHGDLAPGEGAAVPCVTSIHS) are extracellular. An intrachain disulfide couples cysteine 110 to cysteine 142. The discontinuously helical; Pore-forming intramembrane region spans 117-133 (FSSAFLFSIEVQVTIGF). Residues threonine 130 and phenylalanine 133 each coordinate K(+). The short motif at 130–135 (TIGFGG) is the Selectivity filter element. The Extracellular segment spans residues 134-142 (GGRMVTEEC). A helical transmembrane segment spans residues 143 to 171 (PLAILILIVQNIVGLMINAIMLGCIFMKT). Topologically, residues 172–390 (AQAHRRAETL…KFSISPDSLS (219 aa)) are cytoplasmic. Residue arginine 176 coordinates a 1,2-diacyl-sn-glycero-3-phospho-(1D-myo-inositol-4,5-bisphosphate). Tyrosine 330 serves as a coordination point for ATP. Threonine 341 is modified (phosphothreonine; by MAPK1). A Phosphoserine; by MAPK1 modification is found at serine 385.

This sequence belongs to the inward rectifier-type potassium channel (TC 1.A.2.1) family. KCNJ11 subfamily. In terms of assembly, homotetramer; the homotetramer binds four ATP molecules (one ATP per subunit). Forms an heterooctamer with ABCC8/SUR1; one KCNJ11 homotetramer interacts with four ABCC8/SUR1 molecules. Interacts with ABCC9/SUR2. Post-translationally, phosphorylation by MAPK1 results in changes in channel gating that destabilize the closed states and reduce the ATP sensitivity.

Its subcellular location is the membrane. It catalyses the reaction K(+)(in) = K(+)(out). KATP channels are regulated by cytoplasmic ATP/ADP ratios; ATP inhibits the channel by closing the pore, while ADP activates the channel. Activated by phosphatidylinositol 4,5-biphosphate (PtdIns(4,5)P2). In terms of biological role, inward rectifier potassium channel that forms the pore of ATP-sensitive potassium channels (KATP), regulating potassium permeability as a function of cytoplasmic ATP and ADP concentrations in many different cells. Inward rectifier potassium channels are characterized by a greater tendency to allow potassium to flow into the cell rather than out of it. Their voltage dependence is regulated by the concentration of extracellular potassium; as external potassium is raised, the voltage range of the channel opening shifts to more positive voltages. The inward rectification is mainly due to the blockage of outward current by internal magnesium. Can be blocked by extracellular barium. In pancreatic cells, it forms KATP channels with ABCC8/SUR1. Can form cardiac and smooth muscle-type KATP channels with ABCC9. The chain is ATP-sensitive inward rectifier potassium channel 11 (KCNJ11) from Oryctolagus cuniculus (Rabbit).